The sequence spans 418 residues: Arrestin domain-containing protein 4 (418 aa).

2 consecutive short sequence motifs (PPxY motif) follow at residues 350–353 (PPNY) and 395–398 (PPLY).

It belongs to the arrestin family. As to quaternary structure, interacts with ADRB2. Interacts (via PPxY motifs) with ITCH, NEDD4L and WWP2. Interacts with AVPR2. Identified in a complex containing at least ARRDC4, AVPR2 and HGS. Interacts with SLC11A2; controls the incorporation of SLC11A2 into extracellular vesicles through an ubiquitination-dependent mechanism. Interacts with TRIM65.

It is found in the early endosome. It localises to the cell membrane. The protein resides in the cytoplasmic vesicle. In terms of biological role, functions as an adapter recruiting ubiquitin-protein ligases to their specific substrates. Plays a role in endocytosis of activated G protein-coupled receptors (GPCRs). Through an ubiquitination-dependent mechanism also plays a role in the incorporation of SLC11A2 into extracellular vesicles. May play a role in glucose uptake. Participates in innate immune response by promoting IFIH1/MDA5 activation through interaction with TRIM65. The polypeptide is Arrestin domain-containing protein 4 (ARRDC4) (Homo sapiens (Human)).